A 55-amino-acid polypeptide reads, in one-letter code: ATP synthase F(0) complex subunit 8 (55 aa).

The helical transmembrane segment at 7 to 24 threads the bilayer; it reads NPWFFIMLLSWLTFSLII. The disordered stretch occupies residues 35-55; it reads NPPSNKTTTHTKTTPWTWPWT. The span at 37-55 shows a compositional bias: low complexity; that stretch reads PSNKTTTHTKTTPWTWPWT.

Belongs to the ATPase protein 8 family. Component of the ATP synthase complex composed at least of ATP5F1A/subunit alpha, ATP5F1B/subunit beta, ATP5MC1/subunit c (homooctomer), MT-ATP6/subunit a, MT-ATP8/subunit 8, ATP5ME/subunit e, ATP5MF/subunit f, ATP5MG/subunit g, ATP5MK/subunit k, ATP5MJ/subunit j, ATP5F1C/subunit gamma, ATP5F1D/subunit delta, ATP5F1E/subunit epsilon, ATP5PF/subunit F6, ATP5PB/subunit b, ATP5PD/subunit d, ATP5PO/subunit OSCP. ATP synthase complex consists of a soluble F(1) head domain (subunits alpha(3) and beta(3)) - the catalytic core - and a membrane F(0) domain - the membrane proton channel (subunits c, a, 8, e, f, g, k and j). These two domains are linked by a central stalk (subunits gamma, delta, and epsilon) rotating inside the F1 region and a stationary peripheral stalk (subunits F6, b, d, and OSCP).

The protein resides in the mitochondrion membrane. Functionally, subunit 8, of the mitochondrial membrane ATP synthase complex (F(1)F(0) ATP synthase or Complex V) that produces ATP from ADP in the presence of a proton gradient across the membrane which is generated by electron transport complexes of the respiratory chain. ATP synthase complex consist of a soluble F(1) head domain - the catalytic core - and a membrane F(1) domain - the membrane proton channel. These two domains are linked by a central stalk rotating inside the F(1) region and a stationary peripheral stalk. During catalysis, ATP synthesis in the catalytic domain of F(1) is coupled via a rotary mechanism of the central stalk subunits to proton translocation. In vivo, can only synthesize ATP although its ATP hydrolase activity can be activated artificially in vitro. Part of the complex F(0) domain. The protein is ATP synthase F(0) complex subunit 8 of Chaetura pelagica (Chimney swift).